Consider the following 282-residue polypeptide: CD320 antigen (282 aa).

The first 35 residues, M1–A35, serve as a signal peptide directing secretion. At S36–Y229 the chain is on the extracellular side. The LDL-receptor class A 1 domain maps to S53–R90. 3 disulfides stabilise this stretch: C54–C67, C61–C80, and C74–C89. Positions 72, 75, 77, 79, 85, and 86 each coordinate Ca(2+). The N-linked (GlcNAc...) asparagine glycan is linked to N126. Residues A131 to G168 enclose the LDL-receptor class A 2 domain. 3 disulfide bridges follow: C132–C145, C139–C158, and C152–C167. Ca(2+) is bound by residues W150, D153, H155, D157, D163, and E164. Residues N195 and N213 are each glycosylated (N-linked (GlcNAc...) asparagine). The disordered stretch occupies residues M199–S223. The span at S210–S223 shows a compositional bias: polar residues. Residues G230–L250 form a helical membrane-spanning segment. Residues S251–P282 are Cytoplasmic-facing.

In terms of assembly, interacts (via LDL-receptor class A domains) with TCN2. In terms of tissue distribution, detected in the germinal center (GC) of lymphoid follicles (at protein level). Expressed abundantly on follicular dendritic cells (FDCs).

The protein localises to the cell membrane. Functionally, receptor for transcobalamin saturated with cobalamin (TCbl). Plays an important role in cobalamin uptake. Plasma membrane protein that is expressed on follicular dendritic cells (FDC) and mediates interaction with germinal center B cells. Functions as costimulator to promote B cell responses to antigenic stimuli; promotes B cell differentiation and proliferation. Germinal center-B (GC-B) cells differentiate into memory B-cells and plasma cells (PC) through interaction with T-cells and follicular dendritic cells (FDC). CD320 augments the proliferation of PC precursors generated by IL-10. In Homo sapiens (Human), this protein is CD320 antigen (CD320).